Reading from the N-terminus, the 329-residue chain is DNA-directed RNA polymerase subunit alpha (329 aa).

The tract at residues 1 to 234 is alpha N-terminal domain (alpha-NTD); the sequence is MQGSVTEFLK…EQLDAFVELR (234 aa). Positions 248 to 329 are alpha C-terminal domain (alpha-CTD); that stretch reads FDPILLRPVD…WPPASLADDL (82 aa).

The protein belongs to the RNA polymerase alpha chain family. In terms of assembly, homodimer. The RNAP catalytic core consists of 2 alpha, 1 beta, 1 beta' and 1 omega subunit. When a sigma factor is associated with the core the holoenzyme is formed, which can initiate transcription.

The catalysed reaction is RNA(n) + a ribonucleoside 5'-triphosphate = RNA(n+1) + diphosphate. DNA-dependent RNA polymerase catalyzes the transcription of DNA into RNA using the four ribonucleoside triphosphates as substrates. The chain is DNA-directed RNA polymerase subunit alpha from Shewanella baltica (strain OS155 / ATCC BAA-1091).